The following is a 163-amino-acid chain: Ribonuclease P protein component (163 aa).

Residues 1-68 form a disordered region; that stretch reads MDEKDVATQP…GGKLLSLKGD (68 aa). The segment covering 8 to 19 has biased composition (polar residues); that stretch reads TQPQETGQNPRL.

This sequence belongs to the RnpA family. Consists of a catalytic RNA component (M1 or rnpB) and a protein subunit.

The catalysed reaction is Endonucleolytic cleavage of RNA, removing 5'-extranucleotides from tRNA precursor.. Functionally, RNaseP catalyzes the removal of the 5'-leader sequence from pre-tRNA to produce the mature 5'-terminus. It can also cleave other RNA substrates such as 4.5S RNA. The protein component plays an auxiliary but essential role in vivo by binding to the 5'-leader sequence and broadening the substrate specificity of the ribozyme. The polypeptide is Ribonuclease P protein component (Thermus thermophilus (strain ATCC BAA-163 / DSM 7039 / HB27)).